The primary structure comprises 131 residues: Thrombocorticin (131 aa).

A disulfide bond links cysteine 3 and cysteine 111. The interval 28-60 (RNESVEVKDSNGNTVSRGSGSSSSGGTFTVINM) is disordered. Low complexity predominate over residues 37–54 (SNGNTVSRGSGSSSSGGT). The short motif at 117–131 (DFNDVFVLITGLVRG) is the Pseudodomain-swapping motif element.

Binds to fucose and mannose in a calcium-dependent manner (in vitro). Acts as an agonist for human thrombopoietin receptor MPL (in vitro). Binding of sugar-moieties may promote the interaction with human MPL on the cell surface (in vitro). Catalyzes MPL dimerization and activation, and modulates internalization of the receptor (in vitro). Exhibits proliferation activity in murine recombinant Ba/F3 cells expressing human MPL (Ba/F3-huMPL) (in vitro). Induces phosphorylation of STAT5 in recombinant Ba/F3-huMPL cells, possibly by stimulating MPL on the cell surface to transduce signals via Jak/STAT signaling pathway (in vitro). Does not aggregate rabbit erythrocytes, indicating absent lectin-like agglutination activity (in vitro). In Corticium sp. (Marine sponge), this protein is Thrombocorticin.